The sequence spans 29 residues: Cytochrome b6-f complex subunit 8 (29 aa).

Residues 3–23 (IITFGWVAVAAFFALSIAFVV) traverse the membrane as a helical segment.

It belongs to the PetN family. As to quaternary structure, the 4 large subunits of the cytochrome b6-f complex are cytochrome b6, subunit IV (17 kDa polypeptide, PetD), cytochrome f and the Rieske protein, while the 4 small subunits are PetG, PetL, PetM and PetN. The complex functions as a dimer.

The protein localises to the cellular thylakoid membrane. Component of the cytochrome b6-f complex, which mediates electron transfer between photosystem II (PSII) and photosystem I (PSI), cyclic electron flow around PSI, and state transitions. This is Cytochrome b6-f complex subunit 8 from Synechococcus sp. (strain JA-3-3Ab) (Cyanobacteria bacterium Yellowstone A-Prime).